Here is a 99-residue protein sequence, read N- to C-terminus: Large ribosomal subunit protein eL42 (99 aa).

Belongs to the eukaryotic ribosomal protein eL42 family.

The protein is Large ribosomal subunit protein eL42 (RPL44) of Chlamydomonas reinhardtii (Chlamydomonas smithii).